We begin with the raw amino-acid sequence, 437 residues long: Eukaryotic peptide chain release factor subunit 1 (437 aa).

Belongs to the eukaryotic release factor 1 family. Heterodimer of two subunits, one of which binds GTP.

It is found in the cytoplasm. Its function is as follows. Directs the termination of nascent peptide synthesis (translation) in response to the termination codons UAA and possibly also UAG and UGA. In Didinium nasutum, this protein is Eukaryotic peptide chain release factor subunit 1 (eRF1).